A 255-amino-acid polypeptide reads, in one-letter code: Increased copper sensitivity protein 2 (255 aa).

The span at 1-12 shows a compositional bias: basic and acidic residues; that stretch reads MGKFEQKERERI. 2 disordered regions span residues 1–32 and 82–142; these read MGKF…KSLG and PGDK…RKSH. Polar residues predominate over residues 13-30; the sequence is STFSFPTTGSQSSTSIKS. Residues 131–142 show a composition bias toward basic residues; sequence SGRRKSYHRKSH. Ser217 bears the Phosphoserine mark.

This Saccharomyces cerevisiae (strain ATCC 204508 / S288c) (Baker's yeast) protein is Increased copper sensitivity protein 2 (ICS2).